Reading from the N-terminus, the 458-residue chain is Argininosuccinate lyase (458 aa).

It belongs to the lyase 1 family. Argininosuccinate lyase subfamily.

Its subcellular location is the cytoplasm. It carries out the reaction 2-(N(omega)-L-arginino)succinate = fumarate + L-arginine. It functions in the pathway amino-acid biosynthesis; L-arginine biosynthesis; L-arginine from L-ornithine and carbamoyl phosphate: step 3/3. The protein is Argininosuccinate lyase of Heliobacterium mobile (Heliobacillus mobilis).